The sequence spans 124 residues: Small ribosomal subunit protein uS13c (124 aa).

Residues 100–124 (GQRTRTNARTRKGKVKTAVAKKKGR) are disordered. The segment covering 101–124 (QRTRTNARTRKGKVKTAVAKKKGR) has biased composition (basic residues).

The protein belongs to the universal ribosomal protein uS13 family. As to quaternary structure, part of the 30S ribosomal subunit.

It localises to the plastid. Its subcellular location is the chloroplast. Functionally, located at the top of the head of the 30S subunit, it contacts several helices of the 16S rRNA. The sequence is that of Small ribosomal subunit protein uS13c from Emiliania huxleyi (Coccolithophore).